Here is a 382-residue protein sequence, read N- to C-terminus: MSHSAVSQAGAVSVSIENQRSLRRSVFKQNNSISFNSKSWSSSLALNQKTTSIRDGKRYPSTTICMSVQQTSSSKVTVSPIELEDPKDPPLNLYKPKESYTAKIVSVERVVGPKAPGETCHIVIDHDGNLPYWEGQSYGVIPPGENPKKPGAPHNVRLYSIASTRYGDFFDGKTASLCVRRAVYYDPETGKEDPSKNGVCSNFLCDSKPGDKIQITGPSGKVMLLPESDPNATHIMIATGTGVAPYRGYLRRMFMENVPNKTFSGLAWLFLGVANTDSLLYDEEFTKYLKDHPDNFRFDKALSREEKNKKGGKMYVQDKIEEYSDEIFKLLDNGAHIYFCGLKGMMPGIQDTLKRVAEERGESWDLKLSQLRKNKQWHVEVY.

Residues 1-64 (MSHSAVSQAG…DGKRYPSTTI (64 aa)) constitute a chloroplast transit peptide. In terms of domain architecture, FAD-binding FR-type spans 97-225 (KESYTAKIVS…TGPSGKVMLL (129 aa)). Cysteines 200 and 205 form a disulfide. The residue at position 201 (Ser-201) is a Phosphoserine. The residue at position 233 (Thr-233) is a Phosphothreonine. Residue 235-253 (IMIATGTGVAPYRGYLRRM) coordinates NADP(+).

The protein belongs to the ferredoxin--NADP reductase type 1 family. The cofactor is FAD. As to expression, expressed in shoots and roots. More abundant in roots than RFNR1.

The protein resides in the plastid. It is found in the chloroplast. It carries out the reaction 2 reduced [2Fe-2S]-[ferredoxin] + NADP(+) + H(+) = 2 oxidized [2Fe-2S]-[ferredoxin] + NADPH. Maintains the supply of reduced ferredoxin under non-photosynthetic conditions. The chain is Ferredoxin--NADP reductase, root isozyme 2, chloroplastic (RFNR2) from Arabidopsis thaliana (Mouse-ear cress).